The primary structure comprises 297 residues: Nicotinate-nucleotide pyrophosphorylase [carboxylating] (297 aa).

Positions 8–12 are important for hexamer formation; the sequence is LLLPP. Quinolinate is bound by residues Arg-102, 138–139, 160–161, Lys-171, Glu-201, Asp-222, 248–250, and Gly-270; these read RK, HR, and SGG.

It belongs to the NadC/ModD family. Hexamer formed by 3 homodimers.

It catalyses the reaction nicotinate beta-D-ribonucleotide + CO2 + diphosphate = quinolinate + 5-phospho-alpha-D-ribose 1-diphosphate + 2 H(+). The protein operates within cofactor biosynthesis; NAD(+) biosynthesis; nicotinate D-ribonucleotide from quinolinate: step 1/1. Its activity is regulated as follows. Activity toward QA is slightly repressed by phosphoribosylpyrophosphate (PRPP) in both a competitive and a non-competitive manner. Competitively inhibited by phthalic acid (PHT). Involved in the catabolism of quinolinic acid (QA). The chain is Nicotinate-nucleotide pyrophosphorylase [carboxylating] (QPRT) from Homo sapiens (Human).